The primary structure comprises 112 residues: DNA-binding protein TK1278 (112 aa).

The protein belongs to the PDCD5 family.

The chain is DNA-binding protein TK1278 from Thermococcus kodakarensis (strain ATCC BAA-918 / JCM 12380 / KOD1) (Pyrococcus kodakaraensis (strain KOD1)).